Here is a 232-residue protein sequence, read N- to C-terminus: Ribose-5-phosphate isomerase A (232 aa).

Substrate-binding positions include 31-34 (TGST), 87-90 (DGAD), and 100-103 (KGGG). The Proton acceptor role is filled by Glu109. A substrate-binding site is contributed by Lys127.

This sequence belongs to the ribose 5-phosphate isomerase family. In terms of assembly, homodimer.

The catalysed reaction is aldehydo-D-ribose 5-phosphate = D-ribulose 5-phosphate. It participates in carbohydrate degradation; pentose phosphate pathway; D-ribose 5-phosphate from D-ribulose 5-phosphate (non-oxidative stage): step 1/1. Its function is as follows. Catalyzes the reversible conversion of ribose-5-phosphate to ribulose 5-phosphate. The polypeptide is Ribose-5-phosphate isomerase A (Bifidobacterium adolescentis (strain ATCC 15703 / DSM 20083 / NCTC 11814 / E194a)).